The following is a 133-amino-acid chain: Ribosome-binding factor A (133 aa).

This sequence belongs to the RbfA family. As to quaternary structure, monomer. Binds 30S ribosomal subunits, but not 50S ribosomal subunits or 70S ribosomes.

Its subcellular location is the cytoplasm. In terms of biological role, one of several proteins that assist in the late maturation steps of the functional core of the 30S ribosomal subunit. Associates with free 30S ribosomal subunits (but not with 30S subunits that are part of 70S ribosomes or polysomes). Required for efficient processing of 16S rRNA. May interact with the 5'-terminal helix region of 16S rRNA. The polypeptide is Ribosome-binding factor A (Salmonella heidelberg (strain SL476)).